Reading from the N-terminus, the 537-residue chain is CTP synthase (537 aa).

Positions 1–267 are amidoligase domain; that stretch reads MTKYIFVTGG…DQIVCDHLKL (267 aa). A CTP-binding site is contributed by Ser-13. Residue Ser-13 participates in UTP binding. 14–19 contacts ATP; it reads SIGKGI. Tyr-54 provides a ligand contact to L-glutamine. Asp-71 is an ATP binding site. Mg(2+) contacts are provided by Asp-71 and Glu-141. CTP-binding positions include 148–150, 188–193, and Lys-224; these read DIE and KTKPTQ. UTP-binding positions include 188-193 and Lys-224; that span reads KTKPTQ. 240-242 is an ATP binding site; the sequence is RDV. Residues 292–535 enclose the Glutamine amidotransferase type-1 domain; it reads RIALVGKYVE…VTAAVKNKNQ (244 aa). Gly-354 contacts L-glutamine. Catalysis depends on Cys-381, which acts as the Nucleophile; for glutamine hydrolysis. L-glutamine contacts are provided by residues 382 to 385, Glu-405, and Arg-463; that span reads LGMQ. Catalysis depends on residues His-508 and Glu-510.

The protein belongs to the CTP synthase family. In terms of assembly, homotetramer.

It catalyses the reaction UTP + L-glutamine + ATP + H2O = CTP + L-glutamate + ADP + phosphate + 2 H(+). It carries out the reaction L-glutamine + H2O = L-glutamate + NH4(+). The catalysed reaction is UTP + NH4(+) + ATP = CTP + ADP + phosphate + 2 H(+). It functions in the pathway pyrimidine metabolism; CTP biosynthesis via de novo pathway; CTP from UDP: step 2/2. With respect to regulation, allosterically activated by GTP, when glutamine is the substrate; GTP has no effect on the reaction when ammonia is the substrate. The allosteric effector GTP functions by stabilizing the protein conformation that binds the tetrahedral intermediate(s) formed during glutamine hydrolysis. Inhibited by the product CTP, via allosteric rather than competitive inhibition. In terms of biological role, catalyzes the ATP-dependent amination of UTP to CTP with either L-glutamine or ammonia as the source of nitrogen. Regulates intracellular CTP levels through interactions with the four ribonucleotide triphosphates. The protein is CTP synthase of Streptococcus equi subsp. equi (strain 4047).